A 267-amino-acid chain; its full sequence is Hydroxyethylthiazole kinase (267 aa).

M46 lines the substrate pocket. Residues R122 and S168 each contribute to the ATP site. Substrate is bound at residue G195.

This sequence belongs to the Thz kinase family. Mg(2+) serves as cofactor.

It catalyses the reaction 5-(2-hydroxyethyl)-4-methylthiazole + ATP = 4-methyl-5-(2-phosphooxyethyl)-thiazole + ADP + H(+). The protein operates within cofactor biosynthesis; thiamine diphosphate biosynthesis; 4-methyl-5-(2-phosphoethyl)-thiazole from 5-(2-hydroxyethyl)-4-methylthiazole: step 1/1. Its function is as follows. Catalyzes the phosphorylation of the hydroxyl group of 4-methyl-5-beta-hydroxyethylthiazole (THZ). The protein is Hydroxyethylthiazole kinase of Nitratidesulfovibrio vulgaris (strain ATCC 29579 / DSM 644 / CCUG 34227 / NCIMB 8303 / VKM B-1760 / Hildenborough) (Desulfovibrio vulgaris).